A 279-amino-acid chain; its full sequence is Thymidylate synthase 1 (279 aa).

141–142 (RR) provides a ligand contact to dUMP. The active-site Nucleophile is the Cys161. DUMP contacts are provided by residues 181 to 184 (RSND), Asn192, and 222 to 224 (HVY). Asp184 contacts (6R)-5,10-methylene-5,6,7,8-tetrahydrofolate. A (6R)-5,10-methylene-5,6,7,8-tetrahydrofolate-binding site is contributed by Ala278.

The protein belongs to the thymidylate synthase family. Bacterial-type ThyA subfamily. As to quaternary structure, homodimer.

Its subcellular location is the cytoplasm. It carries out the reaction dUMP + (6R)-5,10-methylene-5,6,7,8-tetrahydrofolate = 7,8-dihydrofolate + dTMP. Its pathway is pyrimidine metabolism; dTTP biosynthesis. Functionally, catalyzes the reductive methylation of 2'-deoxyuridine-5'-monophosphate (dUMP) to 2'-deoxythymidine-5'-monophosphate (dTMP) while utilizing 5,10-methylenetetrahydrofolate (mTHF) as the methyl donor and reductant in the reaction, yielding dihydrofolate (DHF) as a by-product. This enzymatic reaction provides an intracellular de novo source of dTMP, an essential precursor for DNA biosynthesis. The sequence is that of Thymidylate synthase 1 from Bacillus spizizenii (strain ATCC 23059 / NRRL B-14472 / W23) (Bacillus subtilis subsp. spizizenii).